A 100-amino-acid polypeptide reads, in one-letter code: Urease subunit gamma (100 aa).

It belongs to the urease gamma subunit family. Heterotrimer of UreA (gamma), UreB (beta) and UreC (alpha) subunits. Three heterotrimers associate to form the active enzyme.

It is found in the cytoplasm. The enzyme catalyses urea + 2 H2O + H(+) = hydrogencarbonate + 2 NH4(+). Its pathway is nitrogen metabolism; urea degradation; CO(2) and NH(3) from urea (urease route): step 1/1. This Rhodopseudomonas palustris (strain BisB18) protein is Urease subunit gamma.